Consider the following 94-residue polypeptide: Late cornified envelope-like proline-rich protein 1 (94 aa).

Disordered stretches follow at residues 1–26 and 47–94; these read MSSD…CEQK and CPRE…PPPE. Residues 53-94 are compositionally biased toward pro residues; it reads PAPPKCPPCPSPSPSSCPPKPCAKPCPPKCPSSCPPPCPPPE.

Belongs to the cornifin (SPRR) family.

The chain is Late cornified envelope-like proline-rich protein 1 (LELP1) from Macaca fascicularis (Crab-eating macaque).